The following is a 525-amino-acid chain: Bifunctional purine biosynthesis protein PurH (525 aa).

The MGS-like domain maps to 1–149; sequence MSDPVIKRAL…KNNESVTVVT (149 aa).

The protein belongs to the PurH family.

The catalysed reaction is (6R)-10-formyltetrahydrofolate + 5-amino-1-(5-phospho-beta-D-ribosyl)imidazole-4-carboxamide = 5-formamido-1-(5-phospho-D-ribosyl)imidazole-4-carboxamide + (6S)-5,6,7,8-tetrahydrofolate. It catalyses the reaction IMP + H2O = 5-formamido-1-(5-phospho-D-ribosyl)imidazole-4-carboxamide. Its pathway is purine metabolism; IMP biosynthesis via de novo pathway; 5-formamido-1-(5-phospho-D-ribosyl)imidazole-4-carboxamide from 5-amino-1-(5-phospho-D-ribosyl)imidazole-4-carboxamide (10-formyl THF route): step 1/1. It functions in the pathway purine metabolism; IMP biosynthesis via de novo pathway; IMP from 5-formamido-1-(5-phospho-D-ribosyl)imidazole-4-carboxamide: step 1/1. The sequence is that of Bifunctional purine biosynthesis protein PurH from Prosthecochloris aestuarii (strain DSM 271 / SK 413).